The chain runs to 152 residues: MGIKVVATNKVAYHNYNIIETYEAGIVLKGSEVKSIREGSVNLRDSFVRIDNGEAFIYNMYIAPYKPASKLQHDPYRKRKLLLHKREILKLMGKVQEKGLTIIPTKVYLKNGKVKIEIALAKGKAKYEKREAIKERDMKRELSKKYKGKIKL.

This sequence belongs to the SmpB family.

It is found in the cytoplasm. Its function is as follows. Required for rescue of stalled ribosomes mediated by trans-translation. Binds to transfer-messenger RNA (tmRNA), required for stable association of tmRNA with ribosomes. tmRNA and SmpB together mimic tRNA shape, replacing the anticodon stem-loop with SmpB. tmRNA is encoded by the ssrA gene; the 2 termini fold to resemble tRNA(Ala) and it encodes a 'tag peptide', a short internal open reading frame. During trans-translation Ala-aminoacylated tmRNA acts like a tRNA, entering the A-site of stalled ribosomes, displacing the stalled mRNA. The ribosome then switches to translate the ORF on the tmRNA; the nascent peptide is terminated with the 'tag peptide' encoded by the tmRNA and targeted for degradation. The ribosome is freed to recommence translation, which seems to be the essential function of trans-translation. The sequence is that of SsrA-binding protein from Persephonella marina (strain DSM 14350 / EX-H1).